A 362-amino-acid chain; its full sequence is tRNA-specific 2-thiouridylase MnmA 3 (362 aa).

Residues 11-18 (GMSGGIDS) and Met-37 contribute to the ATP site. The active-site Nucleophile is Cys-91. A disulfide bond links Cys-91 and Cys-188. Gly-115 provides a ligand contact to ATP. Positions 137–139 (KDQ) are interaction with tRNA. Cys-188 acts as the Cysteine persulfide intermediate in catalysis. An interaction with tRNA region spans residues 296-297 (RY).

It belongs to the MnmA/TRMU family.

It localises to the cytoplasm. The enzyme catalyses S-sulfanyl-L-cysteinyl-[protein] + uridine(34) in tRNA + AH2 + ATP = 2-thiouridine(34) in tRNA + L-cysteinyl-[protein] + A + AMP + diphosphate + H(+). Catalyzes the 2-thiolation of uridine at the wobble position (U34) of tRNA, leading to the formation of s(2)U34. This Bacteroides fragilis (strain YCH46) protein is tRNA-specific 2-thiouridylase MnmA 3.